The sequence spans 126 residues: Phosphoribosyl-AMP cyclohydrolase (126 aa).

Asp73 contacts Mg(2+). Cys74 contributes to the Zn(2+) binding site. Mg(2+) contacts are provided by Asp75 and Asp77. Residues Cys91 and Cys98 each coordinate Zn(2+).

It belongs to the PRA-CH family. In terms of assembly, homodimer. The cofactor is Mg(2+). Zn(2+) is required as a cofactor.

Its subcellular location is the cytoplasm. The catalysed reaction is 1-(5-phospho-beta-D-ribosyl)-5'-AMP + H2O = 1-(5-phospho-beta-D-ribosyl)-5-[(5-phospho-beta-D-ribosylamino)methylideneamino]imidazole-4-carboxamide. Its pathway is amino-acid biosynthesis; L-histidine biosynthesis; L-histidine from 5-phospho-alpha-D-ribose 1-diphosphate: step 3/9. In terms of biological role, catalyzes the hydrolysis of the adenine ring of phosphoribosyl-AMP. The chain is Phosphoribosyl-AMP cyclohydrolase from Solibacter usitatus (strain Ellin6076).